Reading from the N-terminus, the 303-residue chain is 4-sulfomuconolactone hydrolase (303 aa).

Belongs to the metallo-dependent hydrolases superfamily. Sulfomuconolactone hydrolase family. As to quaternary structure, monomer. It depends on Zn(2+) as a cofactor.

The enzyme catalyses 4-sulfomuconolactone + H2O = maleylacetate + sulfite + 2 H(+). With respect to regulation, completely inhibited by ZnCl(2) and CuCl(2). Involved in the degradation of 4-sulfocatechol which is a central intermediate in the degradation of substituted sulfonated benzenes. Catalyzes the hydrolytical desulfonation of 4-sulfomuconolactone to yield maleylacetate. The protein is 4-sulfomuconolactone hydrolase of Hydrogenophaga intermedia.